Consider the following 230-residue polypeptide: Transmembrane protein 225 (230 aa).

Residues methionine 1 to serine 8 lie on the Cytoplasmic side of the membrane. A helical transmembrane segment spans residues isoleucine 9 to isoleucine 29. The Extracellular segment spans residues methionine 30–arginine 71. A helical transmembrane segment spans residues methionine 72–isoleucine 92. The Cytoplasmic portion of the chain corresponds to serine 93–histidine 99. A helical membrane pass occupies residues leucine 100 to tyrosine 120. The Extracellular portion of the chain corresponds to histidine 121–tryptophan 139. A helical membrane pass occupies residues isoleucine 140–isoleucine 160. Topologically, residues glutamine 161–leucine 230 are cytoplasmic. The RVxF signature appears at arginine 224–tryptophan 228.

In terms of assembly, interacts (via RVxF motif) with PPP1CC. As to expression, expressed in testis, epididymis and spermatozoa (at protein level). Not expressed in brain, heart, lung, liver, spleen, kidney and skeletal muscle.

The protein localises to the cytoplasmic vesicle. Its subcellular location is the secretory vesicle. It is found in the acrosome membrane. In terms of biological role, probably inhibits protein phosphatase 1 (PP1) in sperm via binding to catalytic subunit PPP1CC. The polypeptide is Transmembrane protein 225 (Tmem225) (Mus musculus (Mouse)).